A 185-amino-acid polypeptide reads, in one-letter code: CASP-like protein 2C1 (185 aa).

Topologically, residues 1–12 (MVAARVSEVKAE) are cytoplasmic. Residues 13-33 (GVLRGACAALAAAAALLVGLS) form a helical membrane-spanning segment. The Extracellular segment spans residues 34 to 52 (TQTETVLLVRKKATVKDVQ). The helical transmembrane segment at 53-73 (ALWVLAMAAAAAAGYHLLQLL) threads the bilayer. Over 74-105 (KCFYLGRRVGGGASPCRRSSRALAWTCLLLDK) the chain is Cytoplasmic. The chain crosses the membrane as a helical span at residues 106–126 (ACAYTTFATTVAAAQACVIAL). The Extracellular segment spans residues 127 to 147 (DGAHALQWTKLCNIYTRFCEQ). A helical membrane pass occupies residues 148–168 (IAGSLVLGMLAAVGTAVLSAA). Topologically, residues 169–185 (SARNVFRHYSPGTYAAH) are cytoplasmic.

Belongs to the Casparian strip membrane proteins (CASP) family. Homodimer and heterodimers.

The protein resides in the cell membrane. The polypeptide is CASP-like protein 2C1 (Sorghum bicolor (Sorghum)).